A 514-amino-acid polypeptide reads, in one-letter code: Nitric oxide reductase transcription regulator NorR1 (514 aa).

The residue at position 54 (D54) is a 4-aspartylphosphate. One can recognise a Sigma-54 factor interaction domain in the interval 187 to 416; it reads IIGQSQAIAG…LEHVISRAAL (230 aa). ATP contacts are provided by residues 215–222 and 287–296; these read GETGVGKE and EVGELPLSIQ. Positions 490 to 509 form a DNA-binding region, H-T-H motif; sequence WAKAARQLGMDASNLHKLAK.

It functions in the pathway nitrogen metabolism; nitrate reduction (denitrification) [regulation]. Its function is as follows. Required for the nitric oxide (NO) induced expression of NO reductase. Not required for expression of 2 other pathway members, nitrate reductase (nirS) and nitrous oxide reductase (nosZ). This chain is Nitric oxide reductase transcription regulator NorR1 (norR1), found in Cupriavidus necator (strain ATCC 17699 / DSM 428 / KCTC 22496 / NCIMB 10442 / H16 / Stanier 337) (Ralstonia eutropha).